A 311-amino-acid polypeptide reads, in one-letter code: Progestin and adipoQ receptor family member 3 (311 aa).

The interval 1–20 (MHQKLLKSAHYIELGSYQYW) is required for interaction with SREBF2. The Cytoplasmic portion of the chain corresponds to 1-70 (MHQKLLKSAH…KSLFILSNET (70 aa)). The segment at 41–60 (KDNPYITDGYRAYLPSRLCI) is required for interaction with SCAP. A golgi targeting region spans residues 61–71 (KSLFILSNETV). Residues 71–91 (VNIWSHLLGFFLFFTLGIYDM) form a helical membrane-spanning segment. Residues 92–104 (TSVLPSASASRED) lie on the Lumenal side of the membrane. The chain crosses the membrane as a helical span at residues 105–125 (FVICSICLFCFQVCMLCSVGY). At 126–145 (HLFSCHRSEKTCRRWMALDY) the chain is on the cytoplasmic side. Residues 146–166 (AGISIGILGCYVSGVFYAFYC) form a helical membrane-spanning segment. Residues 167–172 (NNYWRQ) are Lumenal-facing. The helical transmembrane segment at 173–193 (VYLITVLAMILAVFFAQIHPS) threads the bilayer. Topologically, residues 194-203 (YLTQQWQRLR) are cytoplasmic. The chain crosses the membrane as a helical span at residues 204–224 (PIIFCSVSGYGVIPTLHWVWL). Topologically, residues 225 to 235 (NGGVSAPIVQD) are lumenal. The chain crosses the membrane as a helical span at residues 236–256 (FAPRVIVMYVIALLAFLFYIS). Residues 257–275 (KVPERYFPGQLNYLGSSHQ) lie on the Cytoplasmic side of the membrane. A helical transmembrane segment spans residues 276–296 (IWHVLAVVMLYWWHQSTVYVM). Topologically, residues 297–311 (QYRHSKPCPDYVSHL) are lumenal. Positions 299 to 303 (RHSKP) are golgi targeting.

The protein belongs to the ADIPOR family. As to quaternary structure, interacts with SCAP and SREBF2; the interactions are direct, increase in low cholesterol conditions and tether SCAP:SREBP complex to the Golgi apparatus. Interaction with SCAP is mutually exclusive with INSIG1. In hepatocytes, interacts with PPARA and HUWE1; the interactions promote PPARA poylubiquitination and HUWE1-mediated degradation. In macrophages, interacts with PPARG and STUB1; the interactions promote PPARG poylubiquitination and STUB1-mediated degradation.

Its subcellular location is the golgi apparatus membrane. Functionally, golgi-anchored protein which modulates its interactors acitivies by tethering them to the Golgi apparatus. Functions as a spatial regulator of RAF1 kinase by sequestrating it to the Golgi apparatus. Acts as a positive regulator of cholesterol biosynthesis by mediating the anchoring of the SCAP:SREBP complex in the Golgi apparatus, thereby promoting SCAP:SREBF2 complex formation, potentiating SREBF2 and SREBF1 processing and enhancing lipid synthesis. Also regulates PPARA and PPARG functions by mediating their interaction with E3 ubiquitin ligases, such as STUB1 or HUWE1, leading to their polyubiquitination and proteasome-mediated degradation. The chain is Progestin and adipoQ receptor family member 3 from Mus musculus (Mouse).